We begin with the raw amino-acid sequence, 233 residues long: Tapetum-specific methyltransferase 1 (233 aa).

A substrate-binding site is contributed by Lys-8. Residues Val-52, Glu-74, 76–77 (GV), Ser-82, Asp-100, and Ala-129 contribute to the S-adenosyl-L-methionine site. Asp-150 contacts substrate. Asp-150 is a binding site for a divalent metal cation. Asp-152 is an S-adenosyl-L-methionine binding site. Residues Asp-176 and Asn-177 each contribute to the a divalent metal cation site.

The protein belongs to the class I-like SAM-binding methyltransferase superfamily. Cation-dependent O-methyltransferase family. CCoAMT subfamily. A divalent metal cation is required as a cofactor. In terms of tissue distribution, expressed in inflorescences and flower buds. Not detected in roots, leaves or stems. Located exclusively in the tapetum of developing stamen.

It functions in the pathway aromatic compound metabolism; phenylpropanoid biosynthesis. Its function is as follows. Methyltransferase involved in phenylpropanoid polyamine conjugate biosynthesis. In vivo, methylates only one of the 5-hydroxyferuloyl moieties of N1,N5,N10-tri-(hydroxyferuloyl)-spermidine, while is able in vitro to convert all three 5-hydroxyferuloyl residues to the corresponding sinapoyl moieties and to methylate caffeoyl CoA and tricaffeoyl spermidine. The protein is Tapetum-specific methyltransferase 1 (TSM1) of Arabidopsis thaliana (Mouse-ear cress).